We begin with the raw amino-acid sequence, 802 residues long: Post-transcriptional regulator mkt1 (802 aa).

Residues serine 227, serine 228, and serine 230 each carry the phosphoserine modification.

It belongs to the XPG/RAD2 endonuclease family. Interacts with pab1 binding protein ath1.

In terms of biological role, involved in post-transcriptional regulation of gene expression by 3'-UTR-mediated RNA regulation. Promotes interactions between mRNA and poly(A)-binding protein. Binds the 3' UTR of mRNAs, centromeric transcripts and antisense-rDNA. Required for the establishment but not the maintenance of heterochromatin at pericentromeres, and for the maintenance of small domains of facultative heterochromatin known as HOODs. This Schizosaccharomyces pombe (strain 972 / ATCC 24843) (Fission yeast) protein is Post-transcriptional regulator mkt1.